The chain runs to 386 residues: SET and MYND domain-containing protein DDB_G0273589 (386 aa).

Residues 6–294 (NGLELKSSEN…KGDQLTISYI (289 aa)) form the SET domain. Residues 51 to 94 (CFNCIKQLPSVIKLSLKCNQCNEIWYCNEQCKNENINKHQHYEC) form an MYND-type zinc finger. Residues 136 to 171 (NNKFIEQQLNNNNNNNNDNEQLTNTLDDVFDLVENQ) are a coiled coil.

The protein belongs to the class V-like SAM-binding methyltransferase superfamily.

Its function is as follows. Probable methyltransferase. This Dictyostelium discoideum (Social amoeba) protein is SET and MYND domain-containing protein DDB_G0273589.